Reading from the N-terminus, the 123-residue chain is Large ribosomal subunit protein bL12 (123 aa).

It belongs to the bacterial ribosomal protein bL12 family. In terms of assembly, homodimer. Part of the ribosomal stalk of the 50S ribosomal subunit. Forms a multimeric L10(L12)X complex, where L10 forms an elongated spine to which 2 to 4 L12 dimers bind in a sequential fashion. Binds GTP-bound translation factors.

Forms part of the ribosomal stalk which helps the ribosome interact with GTP-bound translation factors. Is thus essential for accurate translation. In Laribacter hongkongensis (strain HLHK9), this protein is Large ribosomal subunit protein bL12.